The chain runs to 94 residues: Defensin-7 (94 aa).

A signal peptide spans 1–19 (MRTLTLLSAFLLVALQAWA). Intrachain disulfides connect Cys-65–Cys-93 and Cys-72–Cys-92.

It belongs to the alpha-defensin family.

The protein resides in the secreted. Has antimicrobial activity. The polypeptide is Defensin-7 (DEFA7) (Pan troglodytes (Chimpanzee)).